The primary structure comprises 240 residues: Cysteine-rich venom protein ablomin (240 aa).

The N-terminal stretch at 1 to 19 (MIVFIVLPILAAVLQQSSG) is a signal peptide. One can recognise an SCP domain in the interval 38 to 166 (VDLHNSLRRS…EYSYFYVCQY (129 aa)). Intrachain disulfides connect C75-C153, C92-C167, C148-C164, C186-C193, C189-C198, C202-C235, C211-C229, and C220-C233. The region spanning 202–235 (CTQEDVFTNCNSLVQQSNCQHNYIKTNCPASCFC) is the ShKT domain.

It belongs to the CRISP family. In terms of tissue distribution, expressed by the venom gland.

The protein localises to the secreted. Its function is as follows. Blocks contraction of smooth muscle elicited by high potassium-induced depolarization, but does not block caffeine-stimulated contraction. Since high potassium-treatment activates voltage-gated channels and caffeine exposure activates ryanodine receptors, this toxin may target L-type voltage-gated calcium channels (Cav) (and not ryanodine receptors) on smooth muscle. This toxin also shows a little inhibition on cyclic nucleotide-gated CNGA1 channel. The sequence is that of Cysteine-rich venom protein ablomin from Gloydius blomhoffii (Mamushi).